A 193-amino-acid chain; its full sequence is Protein B4 (193 aa).

3 consecutive transmembrane segments (helical) span residues 15–35, 36–56, and 160–180; these read FFVCIFLCVFFCVCIFLCVFF, CVYFFVCVFFCVCFFVCVFFV, and LSLCGSAFCLSFSLARAIVFS.

It localises to the host membrane. The chain is Protein B4 (B4) from Homo sapiens (Human).